We begin with the raw amino-acid sequence, 395 residues long: MLPAVGSVDEEEDPAEEDCPELVPIETTQSEEEEKSGLGAKIPVTIITGYLGAGKTTLLNYILTEQHSKRVAVILNESGEGSALEKSLAVSQGGELYEEWLELRNGCLCCSVKDNGLRAIENLMQKKGKFDDILLETTGLADPGAVTSMFWVDAELGSDIYLDGIITIVDSKYGLKHLTEEKPDGLINEATRQVALADIILINKTDLVPEEDVKKLRTTIRSINGLGQILETQRSRVDLSNVLDLHAFDSLSGISLQKKLQHVPGTQPHLDQSIVTITFEVPGNAKEEHLNMFIQNLLWEKNVRNKDNHCMEVIRLKGLVSIKDKSQQVIVQGVHELYDLEETPVSWKDDTERTNRLVLIGRNLDKDILKQLFIATVTETEKQWTTHFKEDQVCT.

The tract at residues 1 to 22 is disordered; the sequence is MLPAVGSVDEEEDPAEEDCPEL. The segment covering 8 to 20 has biased composition (acidic residues); the sequence is VDEEEDPAEEDCP. The psi-PxLVp motif motif lies at 17–24; sequence EDCPELVP. 49 to 56 is a binding site for GTP; it reads GYLGAGKT. Cys107, Cys109, and Cys110 together coordinate Zn(2+). The CXCC motif signature appears at 107–110; that stretch reads CLCC. GTP contacts are provided by residues 110–114 and 203–206; these read CSVKD and NKTD. Residues 274 to 377 enclose the CobW C-terminal domain; sequence IVTITFEVPG…ILKQLFIATV (104 aa).

This sequence belongs to the SIMIBI class G3E GTPase family. ZNG1 subfamily.

The protein localises to the nucleus. It carries out the reaction GTP + H2O = GDP + phosphate + H(+). Functionally, zinc chaperone that directly transfers zinc cofactor to target metalloproteins, thereby activating them. Catalyzes zinc insertion into the active site of methionine aminopeptidase METAP1, which function to cleave the initiator methionine from polypeptides during or after protein translation. Mechanistically, the N-terminal psi-PxLVp motif binds to the C6H2-type zinc finger of inactive form of METAP1. After formation of the docked complex, zinc is transferred from the CXCC motif in the GTPase domain of ZNG1E to the zinc binding site in the peptidase domain of METAP1 in a process requiring GTP hydrolysis. GTP/GDP exchange is required for release of active METAP1. This Homo sapiens (Human) protein is Zinc-regulated GTPase metalloprotein activator 1E.